The chain runs to 655 residues: SRSF protein kinase 1 (655 aa).

The interval 1–57 (MERKVLALQARKKRTKAKKDKAQRKPETQHRGSAPHSESDLPEQEEEILGSDDDEQE) is disordered. Residues 10 to 22 (ARKKRTKAKKDKA) show a composition bias toward basic residues. Residues 40–57 (DLPEQEEEILGSDDDEQE) show a composition bias toward acidic residues. The residue at position 51 (S51) is a Phosphoserine; by CK2. The region spanning 80 to 653 (YHVIRKLGWG…AAECLRHPWL (574 aa)) is the Protein kinase domain. ATP contacts are provided by residues 86–94 (LGWGHFSTV) and K109. D213 acts as the Proton acceptor in catalysis. Disordered stretches follow at residues 238-341 (WQRS…QDQT) and 397-417 (FLSS…CTPI). The segment covering 265 to 276 (KNKKKKLKKKQK) has biased composition (basic residues). Basic and acidic residues-rich tracts occupy residues 277-288 (RQAELLEKRMQE) and 304-318 (NKQE…RPLK). 3 positions are modified to phosphoserine: S309, S311, and S333. A Phosphoserine; by CK2 modification is found at S555.

Belongs to the protein kinase superfamily. CMGC Ser/Thr protein kinase family. As to quaternary structure, monomer. Found in a multisubunit complex containing seven proteins, named toposome, which separates entangled circular chromatin DNA during chromosome segregation. Interacts with HHV-1 ICP27 protein. Interacts with DNAJC8 and AHSA1/AHA1 and this mediates formation of a complex with the Hsp70 /Hsp90 machinery. Binds to IGF2BP1, SYNCRIP, HNRNPA2B1 and HNRNPC. Interacts with SAFB/SAFB1 and SAFB2 which inhibits its activity. It depends on Mg(2+) as a cofactor.

It is found in the cytoplasm. It localises to the nucleus. The protein localises to the nucleoplasm. Its subcellular location is the nucleus matrix. The protein resides in the microsome. It is found in the nucleus speckle. It localises to the chromosome. It catalyses the reaction L-seryl-[protein] + ATP = O-phospho-L-seryl-[protein] + ADP + H(+). The enzyme catalyses L-threonyl-[protein] + ATP = O-phospho-L-threonyl-[protein] + ADP + H(+). With respect to regulation, activated by phosphorylation on Ser-51 and Ser-555. Functionally, serine/arginine-rich protein-specific kinase which specifically phosphorylates its substrates at serine residues located in regions rich in arginine/serine dipeptides, known as RS domains and is involved in the phosphorylation of SR splicing factors and the regulation of splicing. Plays a central role in the regulatory network for splicing, controlling the intranuclear distribution of splicing factors in interphase cells and the reorganization of nuclear speckles during mitosis. Can influence additional steps of mRNA maturation, as well as other cellular activities, such as chromatin reorganization in somatic and sperm cells and cell cycle progression. Phosphorylates SFRS2, ZRSR2, LBR and PRM1. Phosphorylates SRSF1 using a directional (C-terminal to N-terminal) and a dual-track mechanism incorporating both processive phosphorylation (in which the kinase stays attached to the substrate after each round of phosphorylation) and distributive phosphorylation steps (in which the kinase and substrate dissociate after each phosphorylation event). The RS domain of SRSF1 binds first to a docking groove in the large lobe of the kinase domain of SRPK1. This induces certain structural changes in SRPK1 and/or RRM2 domain of SRSF1, allowing RRM2 to bind the kinase and initiate phosphorylation. The cycles continue for several phosphorylation steps in a processive manner (steps 1-8) until the last few phosphorylation steps (approximately steps 9-12). During that time, a mechanical stress induces the unfolding of the beta-4 motif in RRM2, which then docks at the docking groove of SRPK1. This also signals RRM2 to begin to dissociate, which facilitates SRSF1 dissociation after phosphorylation is completed. Can mediate hepatitis B virus (HBV) core protein phosphorylation. It plays a negative role in the regulation of HBV replication through a mechanism not involving the phosphorylation of the core protein but by reducing the packaging efficiency of the pregenomic RNA (pgRNA) without affecting the formation of the viral core particles. Can induce splicing of exon 10 in MAPT/TAU. The protein is SRSF protein kinase 1 of Pongo abelii (Sumatran orangutan).